A 599-amino-acid chain; its full sequence is Purine-uracil permease NCS1 (599 aa).

The next 12 helical transmembrane spans lie at 140-160 (LWIG…LVDL), 164-184 (WWQG…PLVL), 218-238 (LVGC…IFLL), 257-277 (TSPL…CIVW), 293-313 (ILIS…GGFG), 327-347 (FWTL…TLAL), 363-383 (IIGQ…GVAV), 411-433 (TLLA…NVVA), 445-465 (FFTF…FQPW), 474-494 (FVYT…GIIL), 525-545 (YNVA…PGFL), and 560-580 (VVYD…YWII).

The protein belongs to the purine-cytosine permease (2.A.39) family. In terms of tissue distribution, expressed in roots, leaves, stems, flowers, siliques and seeds.

It is found in the plastid. The protein localises to the chloroplast envelope. It localises to the chloroplast membrane. Nucleobase-proton symporter that facilitates the uptake of nucleobases in the cells. Can transport adenine, guanine and uracil. Contributes to uracil import into plastids for plastidic uracil salvage which is essential for plant growth and development. This Arabidopsis thaliana (Mouse-ear cress) protein is Purine-uracil permease NCS1.